The chain runs to 369 residues: Chorismate synthase (369 aa).

Arg-48 and Arg-54 together coordinate NADP(+). FMN contacts are provided by residues 125–127 (RSS), 238–239 (NA), Gly-283, 298–302 (KPTSS), and Arg-324.

This sequence belongs to the chorismate synthase family. In terms of assembly, homotetramer. FMNH2 serves as cofactor.

It catalyses the reaction 5-O-(1-carboxyvinyl)-3-phosphoshikimate = chorismate + phosphate. Its pathway is metabolic intermediate biosynthesis; chorismate biosynthesis; chorismate from D-erythrose 4-phosphate and phosphoenolpyruvate: step 7/7. Functionally, catalyzes the anti-1,4-elimination of the C-3 phosphate and the C-6 proR hydrogen from 5-enolpyruvylshikimate-3-phosphate (EPSP) to yield chorismate, which is the branch point compound that serves as the starting substrate for the three terminal pathways of aromatic amino acid biosynthesis. This reaction introduces a second double bond into the aromatic ring system. This Acidiphilium cryptum (strain JF-5) protein is Chorismate synthase.